The sequence spans 764 residues: Thyrotropin receptor (764 aa).

Positions 1–20 are cleaved as a signal peptide; that stretch reads MRPADLLQLVLLLDLPRDLG. Over 21–413 the chain is Extracellular; sequence GMGCSSPPCE…EFNPCEDIMG (393 aa). An intrachain disulfide couples C31 to C41. N-linked (GlcNAc...) asparagine glycans are attached at residues N77, N99, and N113. LRR repeat units follow at residues 100-124, 125-150, 152-174, 176-199, 200-223, 227-248, and 250-271; these read LSKVTHIEIRNTRNLTYIDPDALKE, LPLLKFLGIFNTGLKMFPDLTKVYST, IFFILEITDNPYMTSIPVNAFQG, CNETLTLKLYNNGFTSVQGYAFNG, TKLDAVYLNKNKYLTVIDKDAFGG, GPSLLDVSQTSVTALPSKGLEH, and KELIARNTWTLKKLPLSLSFLH. N-linked (GlcNAc...) asparagine glycosylation is found at N177 and N198. Residue N302 is glycosylated (N-linked (GlcNAc...) asparagine). Position 385 is a sulfotyrosine (Y385). A helical transmembrane segment spans residues 414–441; that stretch reads YKFLRIVVWFVSLLALLGNVFVLLILLT. Residues 442–450 lie on the Cytoplasmic side of the membrane; it reads SHYKLNVPR. The helical transmembrane segment at 451 to 473 threads the bilayer; sequence FLMCNLAFADFCMGMYLLLIASV. Over 474–494 the chain is Extracellular; the sequence is DLYTHSEYYNHAIDWQTGPGC. A disulfide bridge links C494 with C569. A helical membrane pass occupies residues 495-517; that stretch reads NTAGFFTVFASELSVYTLTVITL. Topologically, residues 518 to 537 are cytoplasmic; sequence ERWYAITFAMRLDRKIRLRH. Residues 538-560 traverse the membrane as a helical segment; sequence ACAIMVGGWVCCFLLALLPLVGI. Topologically, residues 561-580 are extracellular; sequence SSYAKVSICLPMDTETPLAL. The helical transmembrane segment at 581–602 threads the bilayer; it reads AYIVFVLTLNIVAFVIVCCCYV. At 603 to 625 the chain is on the cytoplasmic side; that stretch reads KIYITVRNPQYNPGDKDTKIAKR. The chain crosses the membrane as a helical span at residues 626-649; sequence MAVLIFTDFICMAPISFYALSAIL. The Extracellular segment spans residues 650-660; it reads NKPLITVSNSK. Residues 661 to 682 form a helical membrane-spanning segment; it reads ILLVLFYPLNSCANPFLYAIFT. The Cytoplasmic portion of the chain corresponds to 683–764; sequence KAFQRDVFIL…ISEEYMQTVL (82 aa). The short motif at 762 to 764 is the PDZ-binding element; it reads TVL.

This sequence belongs to the G-protein coupled receptor 1 family. FSH/LSH/TSH subfamily. As to quaternary structure, interacts with heterodimer GPHA2:GPHB5; this interaction stimulates cAMP production. Interacts (via the PDZ-binding motif) with SCRIB; regulates TSHR trafficking and function. Post-translationally, glycosylated. In terms of processing, sulfated. Sulfation on Tyr-385 plays a role in thyrotropin receptor binding and activation. As to expression, expressed in thyroide cells (at protein level). Expressed in the thyroid.

The protein localises to the cell membrane. It localises to the basolateral cell membrane. Functionally, receptor for the thyroid-stimulating hormone (TSH) or thyrotropin. Also acts as a receptor for the heterodimeric glycoprotein hormone (GPHA2:GPHB5) or thyrostimulin. The activity of this receptor is mediated by G proteins which activate adenylate cyclase. Plays a central role in controlling thyroid cell metabolism. The protein is Thyrotropin receptor (TSHR) of Homo sapiens (Human).